A 354-amino-acid chain; its full sequence is Fructose-bisphosphate aldolase (354 aa).

Residue serine 50 coordinates D-glyceraldehyde 3-phosphate. Aspartate 83 acts as the Proton donor in catalysis. Histidine 84, aspartate 105, glutamate 142, and histidine 198 together coordinate Zn(2+). Glycine 199 contacts dihydroxyacetone phosphate. Histidine 232 contacts Zn(2+). Dihydroxyacetone phosphate is bound by residues 233 to 235 (GSS) and 275 to 278 (NIDT).

It belongs to the class II fructose-bisphosphate aldolase family. The cofactor is Zn(2+).

The catalysed reaction is beta-D-fructose 1,6-bisphosphate = D-glyceraldehyde 3-phosphate + dihydroxyacetone phosphate. The protein operates within carbohydrate degradation; glycolysis; D-glyceraldehyde 3-phosphate and glycerone phosphate from D-glucose: step 4/4. Catalyzes the aldol condensation of dihydroxyacetone phosphate (DHAP or glycerone-phosphate) with glyceraldehyde 3-phosphate (G3P) to form fructose 1,6-bisphosphate (FBP) in gluconeogenesis and the reverse reaction in glycolysis. In Stutzerimonas stutzeri (Pseudomonas stutzeri), this protein is Fructose-bisphosphate aldolase (fba).